The sequence spans 106 residues: MSESVEQHWSVYLIRNNRNALYCGVTNDIERRFKQHQLGKGAKALKGKGPLVLEWSTSFDSKVTAMRAEYFIKQLTKSKKEQLVELKALIAVDDNQQVMFESCSQS.

One can recognise a GIY-YIG domain in the interval 7–82; that stretch reads QHWSVYLIRN…KQLTKSKKEQ (76 aa).

Belongs to the UPF0213 family.

In Vibrio parahaemolyticus serotype O3:K6 (strain RIMD 2210633), this protein is UPF0213 protein VPA1222.